The following is a 71-amino-acid chain: Cytochrome c oxidase subunit 8C, mitochondrial (71 aa).

Residues 1–28 (MAHLPRVCPFIRRLRVALLCLRPGHRFA) constitute a mitochondrion transit peptide. At 29–39 (HSEPQRQRPAS) the chain is on the mitochondrial matrix side. The helical transmembrane segment at 40-63 (ALEMAVGIVVIFSAFLTPSAYVLS) threads the bilayer. At 64–71 (NLSQFRRE) the chain is on the mitochondrial intermembrane side.

This sequence belongs to the cytochrome c oxidase VIII family. As to quaternary structure, component of the cytochrome c oxidase (complex IV, CIV), a multisubunit enzyme composed of 14 subunits. The complex is composed of a catalytic core of 3 subunits MT-CO1, MT-CO2 and MT-CO3, encoded in the mitochondrial DNA, and 11 supernumerary subunits COX4I, COX5A, COX5B, COX6A, COX6B, COX6C, COX7A, COX7B, COX7C, COX8 and NDUFA4, which are encoded in the nuclear genome. The complex exists as a monomer or a dimer and forms supercomplexes (SCs) in the inner mitochondrial membrane with NADH-ubiquinone oxidoreductase (complex I, CI) and ubiquinol-cytochrome c oxidoreductase (cytochrome b-c1 complex, complex III, CIII), resulting in different assemblies (supercomplex SCI(1)III(2)IV(1) and megacomplex MCI(2)III(2)IV(2)).

The protein localises to the mitochondrion inner membrane. The protein operates within energy metabolism; oxidative phosphorylation. In terms of biological role, component of the cytochrome c oxidase, the last enzyme in the mitochondrial electron transport chain which drives oxidative phosphorylation. The respiratory chain contains 3 multisubunit complexes succinate dehydrogenase (complex II, CII), ubiquinol-cytochrome c oxidoreductase (cytochrome b-c1 complex, complex III, CIII) and cytochrome c oxidase (complex IV, CIV), that cooperate to transfer electrons derived from NADH and succinate to molecular oxygen, creating an electrochemical gradient over the inner membrane that drives transmembrane transport and the ATP synthase. Cytochrome c oxidase is the component of the respiratory chain that catalyzes the reduction of oxygen to water. Electrons originating from reduced cytochrome c in the intermembrane space (IMS) are transferred via the dinuclear copper A center (CU(A)) of subunit 2 and heme A of subunit 1 to the active site in subunit 1, a binuclear center (BNC) formed by heme A3 and copper B (CU(B)). The BNC reduces molecular oxygen to 2 water molecules using 4 electrons from cytochrome c in the IMS and 4 protons from the mitochondrial matrix. The chain is Cytochrome c oxidase subunit 8C, mitochondrial (COX8C) from Eulemur fulvus fulvus (Brown lemur).